The following is a 245-amino-acid chain: 1-(5-phosphoribosyl)-5-[(5-phosphoribosylamino)methylideneamino] imidazole-4-carboxamide isomerase (245 aa).

The active-site Proton acceptor is the Asp7. Residue Asp129 is the Proton donor of the active site.

The protein belongs to the HisA/HisF family.

The protein localises to the cytoplasm. The enzyme catalyses 1-(5-phospho-beta-D-ribosyl)-5-[(5-phospho-beta-D-ribosylamino)methylideneamino]imidazole-4-carboxamide = 5-[(5-phospho-1-deoxy-D-ribulos-1-ylimino)methylamino]-1-(5-phospho-beta-D-ribosyl)imidazole-4-carboxamide. It participates in amino-acid biosynthesis; L-histidine biosynthesis; L-histidine from 5-phospho-alpha-D-ribose 1-diphosphate: step 4/9. This is 1-(5-phosphoribosyl)-5-[(5-phosphoribosylamino)methylideneamino] imidazole-4-carboxamide isomerase from Salmonella dublin (strain CT_02021853).